A 338-amino-acid chain; its full sequence is Probable family 20 transposase (338 aa).

It belongs to the transposase 20 family.

Its function is as follows. Required for the transposition of an insertion element. The protein is Probable family 20 transposase of Pseudomonas aeruginosa (strain ATCC 15692 / DSM 22644 / CIP 104116 / JCM 14847 / LMG 12228 / 1C / PRS 101 / PAO1).